The primary structure comprises 388 residues: 4-hydroxy-3-methylbut-2-en-1-yl diphosphate synthase (flavodoxin) (388 aa).

[4Fe-4S] cluster-binding residues include Cys281, Cys284, Cys316, and Glu323.

It belongs to the IspG family. It depends on [4Fe-4S] cluster as a cofactor.

The enzyme catalyses (2E)-4-hydroxy-3-methylbut-2-enyl diphosphate + oxidized [flavodoxin] + H2O + 2 H(+) = 2-C-methyl-D-erythritol 2,4-cyclic diphosphate + reduced [flavodoxin]. Its pathway is isoprenoid biosynthesis; isopentenyl diphosphate biosynthesis via DXP pathway; isopentenyl diphosphate from 1-deoxy-D-xylulose 5-phosphate: step 5/6. Its function is as follows. Converts 2C-methyl-D-erythritol 2,4-cyclodiphosphate (ME-2,4cPP) into 1-hydroxy-2-methyl-2-(E)-butenyl 4-diphosphate. In Paenarthrobacter aurescens (strain TC1), this protein is 4-hydroxy-3-methylbut-2-en-1-yl diphosphate synthase (flavodoxin).